Here is a 391-residue protein sequence, read N- to C-terminus: Alpha-2B adrenergic receptor (391 aa).

The helical transmembrane segment at 1–25 (AIAAVITFLILFTIFGNALVILAVL) threads the bilayer. The Cytoplasmic portion of the chain corresponds to 26–36 (TSRSLRAPQNL). Residues 37–62 (FLVSLAAADILVATLIIPFSLANELL) traverse the membrane as a helical segment. The Extracellular segment spans residues 63–72 (GYWYFRRTWC). A disulfide bond links C72 and C151. The helical transmembrane segment at 73–95 (EVYLALDVLFCTSSIVHLCAISL) threads the bilayer. The Cytoplasmic segment spans residues 96-117 (DRYWAVSRALEYNSKRTPRRIK). The chain crosses the membrane as a helical span at residues 118-140 (CIILTVWLIAAVISLPPLIYKGD). Topologically, residues 141–156 (QGPQPRGRPQCKLNQE) are extracellular. Residues 157–180 (AWYILASSIGSFFAPCLIMILVYL) form a helical membrane-spanning segment. At 181 to 355 (RIYLIAKRSH…LTREKRFTFV (175 aa)) the chain is on the cytoplasmic side. Disordered stretches follow at residues 194 to 218 (PRAKGAPGKGESKQTGQASLGAPSS) and 233 to 312 (EANR…PLQQ). The span at 233 to 247 (EANRHSKSTGEKVEG) shows a compositional bias: basic and acidic residues. Positions 256–266 (PGVPPSWPPLP) are enriched in pro residues. A compositionally biased stretch (basic and acidic residues) spans 271–281 (GQEEDIYRASP). The segment covering 282-294 (EEEAGDDEEEECE) has biased composition (acidic residues). Residues 295–309 (PQAVPVSPASACSPP) show a composition bias toward low complexity. The chain crosses the membrane as a helical span at residues 356 to 379 (LAVVIGVFVLCWFPFFFSYSLGAI). Over 380–388 (CPQHCKVPH) the chain is Extracellular. A helical membrane pass occupies residues 389–391 (GLF).

This sequence belongs to the G-protein coupled receptor 1 family. Adrenergic receptor subfamily. ADRA2B sub-subfamily. Interacts with RAB26. Interacts with PPP1R9B. Interacts with GGA1, GGA2 and GGA3.

The protein localises to the cell membrane. Its function is as follows. Alpha-2 adrenergic receptors mediate the catecholamine-induced inhibition of adenylate cyclase through the action of G proteins. The chain is Alpha-2B adrenergic receptor (ADRA2B) from Erinaceus europaeus (Western European hedgehog).